A 204-amino-acid polypeptide reads, in one-letter code: Dual-action ribosomal maturation protein DarP (204 aa).

2 disordered regions span residues 1 to 31 and 182 to 204; these read MPPMTRKTRIQPIEPVAEEDDNGYDRPSKSQ and GGASDSDDEAADDAGDDHDDDEA. Positions 186–204 are enriched in acidic residues; that stretch reads DSDDEAADDAGDDHDDDEA.

It belongs to the DarP family.

It localises to the cytoplasm. Functionally, member of a network of 50S ribosomal subunit biogenesis factors which assembles along the 30S-50S interface, preventing incorrect 23S rRNA structures from forming. Promotes peptidyl transferase center (PTC) maturation. This Burkholderia orbicola (strain MC0-3) protein is Dual-action ribosomal maturation protein DarP.